Here is a 213-residue protein sequence, read N- to C-terminus: ATP phosphoribosyltransferase (213 aa).

The protein belongs to the ATP phosphoribosyltransferase family. Short subfamily. As to quaternary structure, heteromultimer composed of HisG and HisZ subunits.

It localises to the cytoplasm. The enzyme catalyses 1-(5-phospho-beta-D-ribosyl)-ATP + diphosphate = 5-phospho-alpha-D-ribose 1-diphosphate + ATP. It participates in amino-acid biosynthesis; L-histidine biosynthesis; L-histidine from 5-phospho-alpha-D-ribose 1-diphosphate: step 1/9. Catalyzes the condensation of ATP and 5-phosphoribose 1-diphosphate to form N'-(5'-phosphoribosyl)-ATP (PR-ATP). Has a crucial role in the pathway because the rate of histidine biosynthesis seems to be controlled primarily by regulation of HisG enzymatic activity. The polypeptide is ATP phosphoribosyltransferase (hisG) (Listeria innocua serovar 6a (strain ATCC BAA-680 / CLIP 11262)).